Reading from the N-terminus, the 802-residue chain is Nuclear polyadenylated RNA-binding protein 3 (802 aa).

Disordered regions lie at residues 1–174 (MSDE…RRET) and 252–293 (ALSV…RMRF). Low complexity predominate over residues 22–34 (SNSNENELMNNSS). Residues 37–73 (DGIEFDAPEEEREAEREEENEEQHELEDVNDEEEEDK) show a composition bias toward acidic residues. Threonine 86 is modified (phosphothreonine). Composition is skewed to acidic residues over residues 101 to 139 (DDDD…EEGN) and 149 to 158 (AAEDGEDEED). Residues 159-174 (KKDKTKDKEVELRRET) show a composition bias toward basic and acidic residues. Residues 260–276 (STISTTASASATSGARS) are compositionally biased toward low complexity. Positions 277 to 293 (NDQRKPPLSDAQRRMRF) are enriched in basic and acidic residues. One can recognise an RRM domain in the interval 330–401 (SRLFIGNLPL…KKLILEVSSS (72 aa)). Threonine 451 is modified (phosphothreonine). 2 disordered regions span residues 571-675 (IYGA…PMDQ) and 717-802 (MQGQ…KLQK). A compositionally biased stretch (pro residues) spans 575–590 (PPLPVPNGPAVGPPPQ). Low complexity predominate over residues 593 to 614 (YYQGYSMPPPQQQQQQPYGNYG). The span at 632–642 (MNQSYGRYQTS) shows a compositional bias: polar residues. 2 stretches are compositionally biased toward low complexity: residues 651 to 661 (QIPQGYGRYQA) and 717 to 738 (MQGQ…MNSS). The segment covering 745-754 (TNYNGQNISA) has biased composition (polar residues). Positions 757 to 769 (SAPPMSHQPPPPQ) are enriched in pro residues. Low complexity predominate over residues 770–785 (QQQQQQQQQQQQQQQP).

The protein resides in the nucleus. The protein localises to the nucleoplasm. Its function is as follows. May be required for packaging pre-mRNAs into ribonucleoprotein structures amenable to efficient nuclear RNA processing. Binds to poly(A)+ RNA. Appears to act in the maintenance of CLN3 mRNA levels. In Saccharomyces cerevisiae (strain ATCC 204508 / S288c) (Baker's yeast), this protein is Nuclear polyadenylated RNA-binding protein 3 (NAB3).